We begin with the raw amino-acid sequence, 627 residues long: Sister chromatid cohesion 1 protein 1 (627 aa).

Disordered regions lie at residues 211–294 (GDDE…TATS), 395–416 (MHNH…NLDS), and 461–510 (GDDV…VAEE). Basic and acidic residues-rich tracts occupy residues 254–263 (EQQENRRDGF), 272–282 (IPDKEEHDRPQ), and 395–408 (MHNH…ERSD). Positions 467–487 (MPSTPSARGAASINNIEISSK) are enriched in polar residues.

It belongs to the rad21 family. In terms of assembly, component of the cohesin complex. Isoform 2 is expressed at low levels in buds, leaves and roots, whereas expression of isoform 1 is confined to buds.

It is found in the nucleus. Functionally, involved in chromosome condensation, pairing and segregation during meiosis. Responsible for cohesion between replicated sister chromatids. The chain is Sister chromatid cohesion 1 protein 1 (SYN1) from Arabidopsis thaliana (Mouse-ear cress).